We begin with the raw amino-acid sequence, 20 residues long: Catechol 1,2-dioxygenase (20 aa).

The protein belongs to the intradiol ring-cleavage dioxygenase family. As to quaternary structure, homodimer which dissociates into active monomeric subunits at high ionic strengths. The cofactor is Fe(3+).

It carries out the reaction catechol + O2 = cis,cis-muconate + 2 H(+). Its pathway is aromatic compound metabolism; beta-ketoadipate pathway; 5-oxo-4,5-dihydro-2-furylacetate from catechol: step 1/3. In Acinetobacter radioresistens, this protein is Catechol 1,2-dioxygenase.